A 27-amino-acid polypeptide reads, in one-letter code: Kunitz-type serine protease inhibitor 3 (27 aa).

Residues 1-27 (EVHNFACLGKPDPGGCAHYIYRRYYYV) enclose the BPTI/Kunitz inhibitor domain.

It localises to the secreted. Its function is as follows. Inhibits bovine trypsin and human neutrophil elastase. The chain is Kunitz-type serine protease inhibitor 3 from Rhipicephalus microplus (Cattle tick).